The sequence spans 381 residues: 5-cytosine rRNA methyltransferase NSUN4 (381 aa).

Residues 1 to 25 constitute a mitochondrion transit peptide; that stretch reads MAAPVLRCVRKLLKLVDFTPVPRRY. S-adenosyl-L-methionine is bound by residues G182, G183, K184, and D201. S203 carries the phosphoserine modification. The S-adenosyl-L-methionine site is built by R206, D234, G235, and D252. C307 functions as the Nucleophile in the catalytic mechanism.

This sequence belongs to the class I-like SAM-binding methyltransferase superfamily. RsmB/NOP family. In terms of assembly, heterodimer with MTERFD2/MTERF4; this interaction seems to be required for NSUN4 recruitment to the mitochondrial large ribosomal subunit.

It localises to the mitochondrion. It carries out the reaction a cytidine in rRNA + S-adenosyl-L-methionine = a 5-methylcytidine in rRNA + S-adenosyl-L-homocysteine + H(+). The catalysed reaction is a cytidine in mRNA + S-adenosyl-L-methionine = a 5-methylcytidine in mRNA + S-adenosyl-L-homocysteine + H(+). Its function is as follows. Mitochondrial RNA cytosine C(5)-methyltransferase that methylates cytosine to 5-methylcytosine (m5C) in various RNAs, such as rRNAs, mRNAs and some long non-coding RNAs (lncRNAs). Involved in mitochondrial ribosome small subunit (SSU) maturation by catalyzing methylation of mitochondrial 12S rRNA; the function is independent of MTERFD2/MTERF4 and assembled mitochondrial ribosome large subunit (LSU). Targeted to LSU by MTERFD2/MTERF4 and probably is involved in a final step in ribosome biogenesis to ensure that SSU and LSU are assembled. In vitro can methylate 16S rRNA of the LSU; the methylation is enhanced by MTERFD/MTERF4. Also acts as a regulator of innate immunity by marking double-stranded mitochondrial RNAs(mt-dsRNAs) generated in response to stress: catalyzes m5C modification on mitochondrial RNAs, such as a mRNAs and lncRNAs, with a preference for the termini of light-strand lncRNAs, promoting their degradation and cytosolic release. Modified light-strand lncRNAs are then recognized by C1QBP reader and recruited to the mitochondrial degradosome complex, which promotes their degradation. The protein is 5-cytosine rRNA methyltransferase NSUN4 of Mus musculus (Mouse).